A 115-amino-acid polypeptide reads, in one-letter code: uncharacterized protein (115 aa).

Residues 1 to 29 (MKKAMAILAVLAAAAVICGLLFFHNDVTD) form the signal peptide.

This is an uncharacterized protein from Bacillus subtilis (strain 168).